Here is a 388-residue protein sequence, read N- to C-terminus: 4-hydroxy-3-methylbut-2-en-1-yl diphosphate synthase (flavodoxin) (388 aa).

Residues Cys281, Cys284, Cys316, and Glu323 each contribute to the [4Fe-4S] cluster site.

Belongs to the IspG family. It depends on [4Fe-4S] cluster as a cofactor.

It carries out the reaction (2E)-4-hydroxy-3-methylbut-2-enyl diphosphate + oxidized [flavodoxin] + H2O + 2 H(+) = 2-C-methyl-D-erythritol 2,4-cyclic diphosphate + reduced [flavodoxin]. Its pathway is isoprenoid biosynthesis; isopentenyl diphosphate biosynthesis via DXP pathway; isopentenyl diphosphate from 1-deoxy-D-xylulose 5-phosphate: step 5/6. Functionally, converts 2C-methyl-D-erythritol 2,4-cyclodiphosphate (ME-2,4cPP) into 1-hydroxy-2-methyl-2-(E)-butenyl 4-diphosphate. This chain is 4-hydroxy-3-methylbut-2-en-1-yl diphosphate synthase (flavodoxin), found in Pseudarthrobacter chlorophenolicus (strain ATCC 700700 / DSM 12829 / CIP 107037 / JCM 12360 / KCTC 9906 / NCIMB 13794 / A6) (Arthrobacter chlorophenolicus).